A 340-amino-acid polypeptide reads, in one-letter code: Coproporphyrin III ferrochelatase (340 aa).

The Fe-coproporphyrin III site is built by serine 52 and tyrosine 116. Histidine 172 and glutamate 255 together coordinate Fe(2+).

Belongs to the ferrochelatase family.

It is found in the cytoplasm. The enzyme catalyses Fe-coproporphyrin III + 2 H(+) = coproporphyrin III + Fe(2+). Its pathway is porphyrin-containing compound metabolism; protoheme biosynthesis. Functionally, involved in coproporphyrin-dependent heme b biosynthesis. Catalyzes the insertion of ferrous iron into coproporphyrin III to form Fe-coproporphyrin III. This is Coproporphyrin III ferrochelatase from Mycobacterium marinum (strain ATCC BAA-535 / M).